The sequence spans 1229 residues: MKYFLLLFLLVLSFTLVESVYQYQILILEPIYRFTDSAAVPAKSIYFTNLPQHFSLTQKSSKLDLSQFNVVRGFTQEMFLKNLGCGTDTCQNFPATVTSVYNIIDLKGRLKFETNPAGTDNVLGKAGYLATEEIEGLVRYDEYYSEEDDSFTYTNGKYPNQFGACQLRDYGKLRYKFVRTLGHAFTAVAIPENLPIYSIFAYDDGLPEPTTTVSPTLSPTQYVFETNPIWKILKNSKNGTQGVGAVNLPWTPPVSASPIEPTNVCLLNGNSSVLSRYGEIDRMLQFFDDTHVIIGFKDSIQDASNTFIYSYIGYAFKSSDNLCGIPLKPIRELYKAGVGNTVVAGDDYSDLISSGYMLTGNIIGYTIDCNSTTDGELIVMIPDGISTISSTTILLTSQFATSSPSQIVGYYVQPVKIVGPSASGGEQGYWVDPELPEPQIGDVLGISNVCLFTASSSIISKCGYTRNIYVYYDNVDKFYFVSLYTFGRSVTSKVIGIAFETEENSCGLNLVPIRELYKDRYYVVAGNDYQYLIDDGYNITGNIVGYTVDCKDSKDEFVYGHLPSYAFSTTTSSMTTTASDSTTSDSSVIVSSSKNPAVSNPFITTYSLPSSPNNPFISITTTPDSASSQKISTTTAISHSAYSASPSTIPTTTPYDLTKPLPKLDCNIIENYGDLNGRMVNFANVMEVGDNITITGHIWQNASESTFNLYVGMDPKYLQSYISIHINMRWATDGIVYNYFWGMWNYQFESYSTRPFSRGLPYVLSVVRGINYYDVYGNGQFIKKFGIIGSVALHQVGAMYGYQQWNIDTVKMNCARSHTTTVEPSTPLETASTSQSTPSATLTSTTENIPSTSKIPETSTTQRPTSPILTSGATSTSSSTESTTTSPTTSTTTTLPPTTTPYNLSAPIPKLDCNTIQFYGNLLWRPVVFSRYMEVGDNITLTGFIWNNATESNVNFYLGFNPLFGTTAVPVHISQRWSSSARIIYNNFWGQWGPEAFSARPFTRGQPFVISLIKTANSHQIYGNGQLLINFGYRGTASQNLIGSMIAYRESTIDTVSMACVRPPTTPTTTTSTTTTTTPKLTTTSTLPSTSTAIATTDVSTRPRSCDINSITLGEGDANTPQLQLDAVLGESSGSSLSIYCRGLPNYSIYMMFNVNQGGPPPVIDGYLEITLDCLPDSEGVWTFGGREITAISCFQAPKCSTFVPSFWRSVDLPILSPTSRVVMLLTWQ.

The first 19 residues, 1–19, serve as a signal peptide directing secretion; it reads MKYFLLLFLLVLSFTLVES. Residues Asn-238, Asn-270, Asn-370, Asn-538, Asn-691, and Asn-701 are each glycosylated (N-linked (GlcNAc...) asparagine). The Galectin 1 domain occupies 678-813; that stretch reads RMVNFANVME…QWNIDTVKMN (136 aa). Polar residues predominate over residues 818–829; that stretch reads HTTTVEPSTPLE. The interval 818-903 is disordered; that stretch reads HTTTVEPSTP…TLPPTTTPYN (86 aa). The span at 830–846 shows a compositional bias: low complexity; it reads TASTSQSTPSATLTSTT. A compositionally biased stretch (polar residues) spans 847-869; the sequence is ENIPSTSKIPETSTTQRPTSPIL. A compositionally biased stretch (low complexity) spans 870 to 901; that stretch reads TSGATSTSSSTESTTTSPTTSTTTTLPPTTTP. Residues Asn-903, Asn-938, and Asn-948 are each glycosylated (N-linked (GlcNAc...) asparagine). Residues 925-1059 enclose the Galectin 2 domain; that stretch reads RPVVFSRYME…ESTIDTVSMA (135 aa). Residues 1061–1087 form a disordered region; it reads VRPPTTPTTTTSTTTTTTPKLTTTSTL. Low complexity predominate over residues 1067 to 1087; the sequence is PTTTTSTTTTTTPKLTTTSTL. The N-linked (GlcNAc...) asparagine glycan is linked to Asn-1146.

This is an uncharacterized protein from Caenorhabditis elegans.